The following is a 488-amino-acid chain: Tripartite motif-containing protein 6 (488 aa).

The RING-type zinc-finger motif lies at 15-60 (CPICLELLTEPLSIDCGHSFCQVCIIGNSNNSVFGQGGRSSCPVCR). The segment at 92 to 133 (LEVIFCALHGEKLQLFCKEDGKLICWLCERSQEHRGHHTFLM) adopts a B box-type zinc-finger fold. Cys97, His100, Cys119, and His125 together coordinate Zn(2+). A coiled-coil region spans residues 132 to 223 (LMEEVAQEYQ…SIIEKAEGDL (92 aa)). The region spanning 282 to 488 (DLRKMLKVFR…VPMTLRRPTS (207 aa)) is the B30.2/SPRY domain.

Belongs to the TRIM/RBCC family. In terms of assembly, homotrimer. Forms heteromultimers (via B30.2/SPRY domain) with TRIM5. Interacts with MYC. Interacts (via SPRY domain) with IKBKE. Interacts with VAMP8; this interaction contributes to the activation of the type I interferon antiviral response. Interacts with DHX16.

It is found in the cytoplasm. It carries out the reaction S-ubiquitinyl-[E2 ubiquitin-conjugating enzyme]-L-cysteine + [acceptor protein]-L-lysine = [E2 ubiquitin-conjugating enzyme]-L-cysteine + N(6)-ubiquitinyl-[acceptor protein]-L-lysine.. It participates in protein modification; protein ubiquitination. In terms of biological role, E3 ubiquitin ligase that plays a crucial role in the activation of the IKBKE-dependent branch of the type I interferon signaling pathway. In concert with the ubiquitin-conjugating E2 enzyme UBE2K, synthesizes unanchored 'Lys-48'-linked polyubiquitin chains that promote the oligomerization and autophosphorylation of IKBKE leading to stimulation of an antiviral response. Also ubiquitinates MYC and inhibits its transcription activation activity, maintaining the pluripotency of embryonic stem cells. Promotes the association of unanchored 'Lys-48'-polyubiquitin chains with DHX16 leading to enhancement of RIGI-mediated innate antiviral immune response. In Mus musculus (Mouse), this protein is Tripartite motif-containing protein 6 (Trim6).